Reading from the N-terminus, the 314-residue chain is MEWSEVEVHTTNEAVEPVANVLTEFGAAGVSIEDVADFLREREDKFGEIYALKREDYPEDGVIIKAYFLKTSEFVEQIPEIEQTLKNLTTFDIPLGKFQFVVNDVDDEEWATAWKKYYHPVQITDRITIVPSWESYTPSANEIIIELDPGMAFGTGTHPTTQLCIRALSDYLQPGDEVIDVGTGSGVLSIASAKLGAKSILATDLDEIATRAAEENITLNKTEHIITVKQNNLLQDINKTNVDIVVANILAEVILLFPEDVYRALKPGGIFIASGIIEDKAKVVEEALKNAGLIIEKIEQQGDWVAIISKRGVE.

Positions 161, 182, 204, and 248 each coordinate S-adenosyl-L-methionine.

Belongs to the methyltransferase superfamily. PrmA family.

The protein resides in the cytoplasm. The enzyme catalyses L-lysyl-[protein] + 3 S-adenosyl-L-methionine = N(6),N(6),N(6)-trimethyl-L-lysyl-[protein] + 3 S-adenosyl-L-homocysteine + 3 H(+). Its function is as follows. Methylates ribosomal protein L11. This Listeria monocytogenes serotype 4a (strain HCC23) protein is Ribosomal protein L11 methyltransferase.